Here is a 547-residue protein sequence, read N- to C-terminus: Threonylcarbamoyladenosine tRNA methylthiotransferase (547 aa).

The disordered stretch occupies residues 30 to 51 (ARKSVVPRARKHKQETGEQMQT). One can recognise an MTTase N-terminal domain in the interval 59–167 (QKVWLKTWGC…VVEVVDEAIK (109 aa)). Positions 68, 104, 133, 209, 213, and 216 each coordinate [4Fe-4S] cluster. Residues 195 to 426 (RKNPLIEIIS…ALFHSYRPYD (232 aa)) enclose the Radical SAM core domain. The 63-residue stretch at 426-488 (DHKMGEQQQV…KHYMKGRPLE (63 aa)) folds into the TRAM domain. A helical transmembrane segment spans residues 527–547 (ILAVVLLLSAVLLALLMEKLL).

The protein belongs to the methylthiotransferase family. CDKAL1 subfamily. [4Fe-4S] cluster serves as cofactor.

The protein localises to the endoplasmic reticulum membrane. It carries out the reaction N(6)-L-threonylcarbamoyladenosine(37) in tRNA + (sulfur carrier)-SH + AH2 + 2 S-adenosyl-L-methionine = 2-methylsulfanyl-N(6)-L-threonylcarbamoyladenosine(37) in tRNA + (sulfur carrier)-H + 5'-deoxyadenosine + L-methionine + A + S-adenosyl-L-homocysteine + 2 H(+). Functionally, catalyzes the methylthiolation of N6-threonylcarbamoyladenosine (t(6)A), leading to the formation of 2-methylthio-N6-threonylcarbamoyladenosine (ms(2)t(6)A) at position 37 in tRNAs that read codons beginning with adenine. The protein is Threonylcarbamoyladenosine tRNA methylthiotransferase (cdkal1) of Danio rerio (Zebrafish).